We begin with the raw amino-acid sequence, 249 residues long: Adenylate kinase (249 aa).

43-48 (GAGKGT) is an ATP binding site. An NMP region spans residues 63-92 (ATGDMLRAQVAAKTALGVEAKKIMDQGGLV). AMP contacts are provided by residues threonine 64, arginine 69, 90–92 (GLV), 119–122 (GFPR), and glutamine 126. Positions 160–197 (GRLVHPASGRSYHKLFNPPKKDMTDDVTGEPLVQRSDD) are LID. ATP is bound by residues arginine 161 and 170–171 (SY). Positions 177 to 197 (PPKKDMTDDVTGEPLVQRSDD) are disordered. Positions 194 and 205 each coordinate AMP. Position 233 (glutamine 233) interacts with ATP.

It belongs to the adenylate kinase family. AK2 subfamily. As to quaternary structure, monomer.

The protein localises to the cytoplasm. The protein resides in the cytosol. Its subcellular location is the mitochondrion intermembrane space. It carries out the reaction AMP + ATP = 2 ADP. Catalyzes the reversible transfer of the terminal phosphate group between ATP and AMP. Plays an important role in cellular energy homeostasis and in adenine nucleotide metabolism. Adenylate kinase activity is critical for regulation of the phosphate utilization and the AMP de novo biosynthesis pathways. The protein is Adenylate kinase of Candida albicans (strain SC5314 / ATCC MYA-2876) (Yeast).